The sequence spans 261 residues: MSDILDRIIAVKREEVAAAMRSTPLEALKLEASARDRRDFVGALRAKHAAGQPAVIAEIKKASPSKGVLREHFVPADIARSYAAHGAACLSVLTDEQFFQGSVRYLEEARAACDLPVLRKDFIVDAYQILEARAMGADAILLIAAALDTPLMQELEAYAHSLDLAVLVEVHDRNEMEQALTLKTPLLGINNRNLRTFETSIRATLDMLDMIPQDRIVVTESGILSRADVDTMRAANVNTFLVGEAFMRADQPGEELARMFF.

The protein belongs to the TrpC family.

The enzyme catalyses 1-(2-carboxyphenylamino)-1-deoxy-D-ribulose 5-phosphate + H(+) = (1S,2R)-1-C-(indol-3-yl)glycerol 3-phosphate + CO2 + H2O. It participates in amino-acid biosynthesis; L-tryptophan biosynthesis; L-tryptophan from chorismate: step 4/5. This chain is Indole-3-glycerol phosphate synthase, found in Burkholderia multivorans (strain ATCC 17616 / 249).